A 261-amino-acid chain; its full sequence is MTHQTHAYHMVNPSPWPLTGALSALLMTSGLIMWFHFNSTTLLMLGLTTNMLTMYQWWRDIIRESTFQGHHTPSVQKGLRYGMILFIISEVLFFTGFFWAFYHSSLAPTPELGGCWPPTGIHPLNPLEVPLLNTSVLLASGVSITWAHHSLMEGNRNHMLQALFITIALGVYFTLLQASEYYEAPFTISDGVYGSTFFVATGFHGLHVIIGSTFLIVCFFRQLKFHFTSNHHFGFEAAAWYWHFVDVVWLFLYVSIYWWGS.

Topologically, residues 1-15 are mitochondrial matrix; the sequence is MTHQTHAYHMVNPSP. A helical membrane pass occupies residues 16-34; the sequence is WPLTGALSALLMTSGLIMW. The Mitochondrial intermembrane segment spans residues 35 to 40; sequence FHFNST. The helical transmembrane segment at 41–66 threads the bilayer; that stretch reads TLLMLGLTTNMLTMYQWWRDIIREST. The Mitochondrial matrix segment spans residues 67-72; that stretch reads FQGHHT. Residues 73–105 traverse the membrane as a helical segment; sequence PSVQKGLRYGMILFIISEVLFFTGFFWAFYHSS. Residues 106-128 are Mitochondrial intermembrane-facing; sequence LAPTPELGGCWPPTGIHPLNPLE. Residues 129–152 traverse the membrane as a helical segment; sequence VPLLNTSVLLASGVSITWAHHSLM. Residues 153–155 are Mitochondrial matrix-facing; sequence EGN. A helical transmembrane segment spans residues 156–183; the sequence is RNHMLQALFITIALGVYFTLLQASEYYE. Over 184 to 190 the chain is Mitochondrial intermembrane; that stretch reads APFTISD. A helical transmembrane segment spans residues 191–223; sequence GVYGSTFFVATGFHGLHVIIGSTFLIVCFFRQL. At 224-232 the chain is on the mitochondrial matrix side; sequence KFHFTSNHH. A helical transmembrane segment spans residues 233–256; sequence FGFEAAAWYWHFVDVVWLFLYVSI. At 257–261 the chain is on the mitochondrial intermembrane side; that stretch reads YWWGS.

The protein belongs to the cytochrome c oxidase subunit 3 family. Component of the cytochrome c oxidase (complex IV, CIV), a multisubunit enzyme composed of 14 subunits. The complex is composed of a catalytic core of 3 subunits MT-CO1, MT-CO2 and MT-CO3, encoded in the mitochondrial DNA, and 11 supernumerary subunits COX4I, COX5A, COX5B, COX6A, COX6B, COX6C, COX7A, COX7B, COX7C, COX8 and NDUFA4, which are encoded in the nuclear genome. The complex exists as a monomer or a dimer and forms supercomplexes (SCs) in the inner mitochondrial membrane with NADH-ubiquinone oxidoreductase (complex I, CI) and ubiquinol-cytochrome c oxidoreductase (cytochrome b-c1 complex, complex III, CIII), resulting in different assemblies (supercomplex SCI(1)III(2)IV(1) and megacomplex MCI(2)III(2)IV(2)).

The protein localises to the mitochondrion inner membrane. It catalyses the reaction 4 Fe(II)-[cytochrome c] + O2 + 8 H(+)(in) = 4 Fe(III)-[cytochrome c] + 2 H2O + 4 H(+)(out). Component of the cytochrome c oxidase, the last enzyme in the mitochondrial electron transport chain which drives oxidative phosphorylation. The respiratory chain contains 3 multisubunit complexes succinate dehydrogenase (complex II, CII), ubiquinol-cytochrome c oxidoreductase (cytochrome b-c1 complex, complex III, CIII) and cytochrome c oxidase (complex IV, CIV), that cooperate to transfer electrons derived from NADH and succinate to molecular oxygen, creating an electrochemical gradient over the inner membrane that drives transmembrane transport and the ATP synthase. Cytochrome c oxidase is the component of the respiratory chain that catalyzes the reduction of oxygen to water. Electrons originating from reduced cytochrome c in the intermembrane space (IMS) are transferred via the dinuclear copper A center (CU(A)) of subunit 2 and heme A of subunit 1 to the active site in subunit 1, a binuclear center (BNC) formed by heme A3 and copper B (CU(B)). The BNC reduces molecular oxygen to 2 water molecules using 4 electrons from cytochrome c in the IMS and 4 protons from the mitochondrial matrix. In Pelea capreolus (Gray rhebok), this protein is Cytochrome c oxidase subunit 3 (MT-CO3).